A 550-amino-acid chain; its full sequence is Glucose-6-phosphate isomerase 2 (550 aa).

The active-site Proton donor is Glu-359. Catalysis depends on residues His-390 and Lys-514.

The protein belongs to the GPI family.

It is found in the cytoplasm. It carries out the reaction alpha-D-glucose 6-phosphate = beta-D-fructose 6-phosphate. It participates in carbohydrate biosynthesis; gluconeogenesis. It functions in the pathway carbohydrate degradation; glycolysis; D-glyceraldehyde 3-phosphate and glycerone phosphate from D-glucose: step 2/4. In terms of biological role, catalyzes the reversible isomerization of glucose-6-phosphate to fructose-6-phosphate. The chain is Glucose-6-phosphate isomerase 2 from Streptomyces avermitilis (strain ATCC 31267 / DSM 46492 / JCM 5070 / NBRC 14893 / NCIMB 12804 / NRRL 8165 / MA-4680).